Here is a 985-residue protein sequence, read N- to C-terminus: DNA polymerase (985 aa).

Positions 936 to 972 (APSASDASGKRARKGAAPSDDESGSSEDEDAPCEPKC) are disordered. Residues 954–967 (SDDESGSSEDEDAP) are compositionally biased toward acidic residues.

The protein belongs to the DNA polymerase type-B family.

The enzyme catalyses DNA(n) + a 2'-deoxyribonucleoside 5'-triphosphate = DNA(n+1) + diphosphate. Replicates the viral genome, host DNA polymerases cannot substitute for the viral enzyme in this process. This chain is DNA polymerase (POL), found in Orgyia pseudotsugata (Douglas-fir tussock moth).